Consider the following 898-residue polypeptide: Sodium/hydrogen exchanger 5 (898 aa).

The Cytoplasmic portion of the chain corresponds to 1–48 (MLSAALLLLPGLPLAGAGATEEPTQESGPLGEPPPGLALFRWQWHEVE). The chain crosses the membrane as a helical span at residues 49–69 (APYLVALWILVASLAKIVFHL). The Extracellular segment spans residues 70–76 (SRKVTSL). Residues 77 to 97 (VPESCLLILLGLVLGGIVLAV) form a helical membrane-spanning segment. Residues 98–106 (AKKAEYQLE) lie on the Cytoplasmic side of the membrane. The chain crosses the membrane as a helical span at residues 107–127 (PGTFFLFLLPPIVLDSGYFMP). At 128–137 (SRLFFDNLGA) the chain is on the extracellular side. A helical membrane pass occupies residues 138–158 (ILTYAVVGTLWNAFTTGVALW). Residues 159–176 (GLQQAGLVAPRVQAGLLD) are Cytoplasmic-facing. Residues 177-197 (FLLFGSLISAVDPVAVLAVFE) form a helical membrane-spanning segment. Residues 198–203 (EVHVNQ) lie on the Extracellular side of the membrane. A helical membrane pass occupies residues 204–224 (TLFIIIFGESLLNDAVTVVLY). Residues 225 to 249 (KVCNSFVEMGSANVQATDYLKGVAS) are Cytoplasmic-facing. A helical membrane pass occupies residues 250–270 (LFVVSLGGAAVGLVFAFLLAL). Residues 271-279 (TTRFTKRVR) lie on the Extracellular side of the membrane. The helical transmembrane segment at 280–300 (IIEPLLVFLLAYAAYLTAEMA) threads the bilayer. The Cytoplasmic portion of the chain corresponds to 301-334 (SLSAILAVTMCGLGCKKYVEANISHKSRTAVKYT). Residues 335-355 (MKTLASCAETVIFMLLGISAV) traverse the membrane as a helical segment. Residues 356-363 (DSSKWAWD) are Extracellular-facing. The chain crosses the membrane as a helical span at residues 364–384 (SGLVLGTLFFILFFRALGVVL). At 385–401 (QTWALNQFRLVPLDKID) the chain is on the cytoplasmic side. A helical membrane pass occupies residues 402–422 (QVVMSYGGLRGAVAFALVILL). The Extracellular portion of the chain corresponds to 423–431 (DRTKVPAKD). The chain crosses the membrane as a helical span at residues 432–452 (YFVATTIVVVFFTVIVQGLTI). At 453-898 (KPLVKWLRVK…CIQFNRGGRL (446 aa)) the chain is on the cytoplasmic side. 2 disordered regions span residues 660-693 (FTKSKPRPRKTSHKKKDGVANPEATNGKPPRDLG) and 826-866 (EEPQ…PQQE). Residues 663-675 (SKPRPRKTSHKKK) show a composition bias toward basic residues. A compositionally biased stretch (polar residues) spans 857 to 866 (ESSADIPQQE).

The protein belongs to the monovalent cation:proton antiporter 1 (CPA1) transporter (TC 2.A.36) family. As to quaternary structure, interacts with CHP1 and CHP2. Interacts with ARRB2; facilitates the endocytosis of SLC9A5 from the plasma membrane. Interacts with RACK1; this interaction positively regulates SLC9A5 activity and promote SLC9A5 localization to focal adhesions. Interacts with SCAMP2; this interaction regulates SLC9A5 cell-surface targeting and SLC9A5 activity. In terms of processing, phosphorylated by PRKAA2; promotes its accumulation at the cell surface. Phosphorylated by CSNK2A1 in a manner favoring its beta-arrestin binding and endocytosis. As to expression, highest expression level is detected in brain. Expressed in hippocampal neurons (at protein level).

It localises to the cell membrane. The protein localises to the recycling endosome membrane. Its subcellular location is the cell projection. The protein resides in the dendritic spine membrane. It is found in the synaptic cell membrane. It localises to the cell junction. The protein localises to the focal adhesion. It carries out the reaction Na(+)(in) + H(+)(out) = Na(+)(out) + H(+)(in). Its function is as follows. Plasma membrane Na(+)/H(+) antiporter. Mediates the electroneutral exchange of intracellular H(+) ions for extracellular Na(+) in 1:1 stoichiometry. Responsible for regulating intracellular pH homeostasis, in particular in neural tissues. Acts as a negative regulator of dendritic spine growth. Plays a role in postsynaptic remodeling and signaling. Can also contribute to organellar pH regulation, with consequences for receptor tyrosine kinase trafficking. This Mus musculus (Mouse) protein is Sodium/hydrogen exchanger 5 (Slc9a5).